An 864-amino-acid chain; its full sequence is Leucine--tRNA ligase (864 aa).

Residues 50 to 60 (PYPSGKIHMGH) carry the 'HIGH' region motif. A 'KMSKS' region motif is present at residues 622 to 626 (KMSKS). Lys625 contributes to the ATP binding site.

This sequence belongs to the class-I aminoacyl-tRNA synthetase family.

Its subcellular location is the cytoplasm. It carries out the reaction tRNA(Leu) + L-leucine + ATP = L-leucyl-tRNA(Leu) + AMP + diphosphate. The protein is Leucine--tRNA ligase of Acidiphilium cryptum (strain JF-5).